A 147-amino-acid polypeptide reads, in one-letter code: Hemoglobin subunit beta-2 (147 aa).

At valine 2 the chain carries N-acetylvaline. The Globin domain maps to histidine 3 to histidine 147. Serine 13 carries the post-translational modification Phosphoserine. The residue at position 18 (lysine 18) is an N6-succinyllysine. 2 positions are modified to phosphoserine: serine 51 and serine 53. Residues histidine 64 and histidine 93 each contribute to the heme b site. The residue at position 105 (arginine 105) is an Asymmetric dimethylarginine. The residue at position 124 (threonine 124) is a Phosphothreonine. Cysteine 126 is modified (phosphoserine; in variant Ser-126).

This sequence belongs to the globin family. Heterotetramer of two alpha chains and two beta chains. Red blood cells.

Functionally, involved in oxygen transport from the lung to the various peripheral tissues. In Rattus norvegicus (Rat), this protein is Hemoglobin subunit beta-2.